The primary structure comprises 294 residues: C-type lectin domain family 4 member G (294 aa).

Residues Met-1–Arg-30 lie on the Cytoplasmic side of the membrane. Residues Leu-31–Thr-51 form a helical; Signal-anchor for type II membrane protein membrane-spanning segment. Residues Leu-52–Tyr-294 lie on the Extracellular side of the membrane. Asn-73 carries an N-linked (GlcNAc...) asparagine glycan. Residues Ala-100–Ala-151 are a coiled coil. N-linked (GlcNAc...) asparagine glycans are attached at residues Asn-159, Asn-246, and Asn-256. Residues Phe-172–Cys-287 form the C-type lectin domain. A disulfide bridge connects residues Cys-264 and Cys-278.

The protein localises to the cell membrane. Functionally, binds mannose, N-acetylglucosamine (GlcNAc) and fucose, but not galactose, in a Ca(2+)-dependent manner. This is C-type lectin domain family 4 member G (Clec4g) from Mus musculus (Mouse).